Consider the following 1876-residue polypeptide: Mediator of RNA polymerase II transcription subunit 12 (1876 aa).

Over residues 1–10 (MLRSGAASAS) the composition is skewed to low complexity. Disordered regions lie at residues 1 to 75 (MLRS…DMSQ), 291 to 314 (TATASPAPVSPSTHLPRTPSAAPS), 715 to 737 (PSASSATEQHQNPDGSVQTPSSV), 1373 to 1405 (STDADKTPRRMDNSHKGMTNFGPDDGADAPAQA), and 1801 to 1876 (LPCR…SKRD). Positions 1373–1387 (STDADKTPRRMDNSH) are enriched in basic and acidic residues. The span at 1394 to 1405 (GPDDGADAPAQA) shows a compositional bias: low complexity. Over residues 1867–1876 (SRKRRLSKRD) the composition is skewed to basic residues.

This sequence belongs to the Mediator complex subunit 12 family. Component of the SRB8-11 complex, which itself associates with the Mediator complex.

It localises to the nucleus. Functionally, component of the SRB8-11 complex. The SRB8-11 complex is a regulatory module of the Mediator complex which is itself involved in regulation of basal and activated RNA polymerase II-dependent transcription. The SRB8-11 complex may be involved in the transcriptional repression of a subset of genes regulated by Mediator. It may inhibit the association of the Mediator complex with RNA polymerase II to form the holoenzyme complex. In Mycosarcoma maydis (Corn smut fungus), this protein is Mediator of RNA polymerase II transcription subunit 12 (SRB8).